Reading from the N-terminus, the 123-residue chain is Protein Wnt-7b (123 aa).

Ser1 is lipidated: O-palmitoleoyl serine; by PORCN. Positions 33-61 (VEVVRASRLRQPTFLKIKQIKSYQKPMET) are disordered linker. A disulfide bridge connects residues Cys89 and Cys104. N-linked (GlcNAc...) asparagine glycosylation occurs at Asn90.

Belongs to the Wnt family. In terms of processing, palmitoleoylation is required for efficient binding to frizzled receptors. Depalmitoleoylation leads to Wnt signaling pathway inhibition.

Its subcellular location is the secreted. The protein localises to the extracellular space. The protein resides in the extracellular matrix. In terms of biological role, ligand for members of the frizzled family of seven transmembrane receptors that functions in the canonical Wnt/beta-catenin signaling pathway. Required for normal fusion of the chorion and the allantois during placenta development. Required for central nervous system (CNS) angiogenesis and blood-brain barrier regulation. This chain is Protein Wnt-7b (WNT7B), found in Anser caerulescens (Snow goose).